A 157-amino-acid polypeptide reads, in one-letter code: Endoribonuclease YbeY (157 aa).

Positions 111, 115, and 121 each coordinate Zn(2+). Residues 136 to 157 are disordered; the sequence is ELLAELGHPDPYADDETDSITH. A compositionally biased stretch (acidic residues) spans 147–157; sequence YADDETDSITH.

It belongs to the endoribonuclease YbeY family. Requires Zn(2+) as cofactor.

It is found in the cytoplasm. In terms of biological role, single strand-specific metallo-endoribonuclease involved in late-stage 70S ribosome quality control and in maturation of the 3' terminus of the 16S rRNA. In Pseudomonas putida (strain ATCC 700007 / DSM 6899 / JCM 31910 / BCRC 17059 / LMG 24140 / F1), this protein is Endoribonuclease YbeY.